The primary structure comprises 87 residues: UPF0250 protein CKO_02527 (87 aa).

Belongs to the UPF0250 family.

This Citrobacter koseri (strain ATCC BAA-895 / CDC 4225-83 / SGSC4696) protein is UPF0250 protein CKO_02527.